We begin with the raw amino-acid sequence, 150 residues long: Linear element protein rec25 (150 aa).

The residue at position 11 (S11) is a Phosphoserine.

As to quaternary structure, component of linear elements (LinEs), which are similar to synaptonemal complexes, at least composed of rec27, rec25, rec10 and mug20. Interacts with rec10; the interaction is direct.

It localises to the cytoplasm. The protein resides in the nucleus. Its subcellular location is the chromosome. In terms of biological role, during meiotic DNA recombination, binds to and may help activate DNA double-strand break (DSB) hotspot sites. In Schizosaccharomyces pombe (strain 972 / ATCC 24843) (Fission yeast), this protein is Linear element protein rec25.